The sequence spans 402 residues: Phosphoglycerate kinase (402 aa).

Residues 24 to 26, arginine 40, 63 to 66, arginine 122, and arginine 155 each bind substrate; these read DFN and HFGR. ATP is bound by residues lysine 206, glycine 297, glutamate 328, and 357–360; that span reads GGDS.

This sequence belongs to the phosphoglycerate kinase family. Monomer.

It localises to the cytoplasm. The catalysed reaction is (2R)-3-phosphoglycerate + ATP = (2R)-3-phospho-glyceroyl phosphate + ADP. The protein operates within carbohydrate degradation; glycolysis; pyruvate from D-glyceraldehyde 3-phosphate: step 2/5. This is Phosphoglycerate kinase from Synechococcus sp. (strain WH7803).